Here is a 328-residue protein sequence, read N- to C-terminus: Endochitinase (328 aa).

Positions 1–27 (MKKNRMMMMIWSVGVVWMLLLVGGSYG) are cleaved as a signal peptide. The 41-residue stretch at 28 to 68 (EQCGRQAGGALCPGGNCCSQFGWCGSTTDYCGPGCQSQCGG) folds into the Chitin-binding type-1 domain. 7 disulfide bridges follow: Cys-30–Cys-45, Cys-39–Cys-51, Cys-44–Cys-58, Cys-62–Cys-66, Cys-97–Cys-159, Cys-170–Cys-178, and Cys-277–Cys-309. The active-site Proton donor is Glu-141. Positions 318–328 (SLLLSDLVTSQ) are cleaved as a propeptide — removed in mature form.

Belongs to the glycosyl hydrolase 19 family. Chitinase class I subfamily.

The protein localises to the vacuole. The catalysed reaction is Random endo-hydrolysis of N-acetyl-beta-D-glucosaminide (1-&gt;4)-beta-linkages in chitin and chitodextrins.. Functionally, defense against chitin-containing fungal pathogens. This is Endochitinase from Phaseolus vulgaris (Kidney bean).